We begin with the raw amino-acid sequence, 428 residues long: GTPase Obg (428 aa).

The Obg domain occupies 1 to 158 (MFVDQVKIYV…RYIVLELKVL (158 aa)). A disordered region spans residues 118–143 (KGGRGGRGNTRFATPANPAPQLSENG). The region spanning 159–329 (ADVGLVGFPS…LLFEIADRLE (171 aa)) is the OBG-type G domain. GTP contacts are provided by residues 165–172 (GFPSVGKS), 190–194 (FTTLN), 212–215 (DLPG), 282–285 (NKMD), and 310–312 (SAV). The Mg(2+) site is built by serine 172 and threonine 192. In terms of domain architecture, OCT spans 350–428 (KLEDEEAPFE…LLEFEFEFID (79 aa)).

It belongs to the TRAFAC class OBG-HflX-like GTPase superfamily. OBG GTPase family. In terms of assembly, monomer. Requires Mg(2+) as cofactor.

It localises to the cytoplasm. In terms of biological role, an essential GTPase which binds GTP, GDP and possibly (p)ppGpp with moderate affinity, with high nucleotide exchange rates and a fairly low GTP hydrolysis rate. Plays a role in control of the cell cycle, stress response, ribosome biogenesis and in those bacteria that undergo differentiation, in morphogenesis control. The sequence is that of GTPase Obg from Bacillus licheniformis (strain ATCC 14580 / DSM 13 / JCM 2505 / CCUG 7422 / NBRC 12200 / NCIMB 9375 / NCTC 10341 / NRRL NRS-1264 / Gibson 46).